Consider the following 128-residue polypeptide: Fluoride-specific ion channel FluC (128 aa).

4 helical membrane-spanning segments follow: residues 1–21, 45–65, 70–90, and 99–119; these read MPER…GATA, LAGC…SLVS, LLLA…MYEI, and IFYS…CLYF. Na(+) contacts are provided by G78 and T81.

The protein belongs to the fluoride channel Fluc/FEX (TC 1.A.43) family.

The protein localises to the cell inner membrane. It carries out the reaction fluoride(in) = fluoride(out). Na(+) is not transported, but it plays an essential structural role and its presence is essential for fluoride channel function. Fluoride-specific ion channel. Important for reducing fluoride concentration in the cell, thus reducing its toxicity. The sequence is that of Fluoride-specific ion channel FluC from Chlorobium phaeobacteroides (strain BS1).